The following is a 316-amino-acid chain: Putative HTH-type transcriptional regulatory protein PYRAB03670 (316 aa).

Positions 131-189 (LKDLREKHGYSLSELANILGVSRKSLQRYEKGDSMVTLEVALRLEEVFDEALVKPINVL) constitute an HTH cro/C1-type domain. The segment at residues 142–161 (LSELANILGVSRKSLQRYEK) is a DNA-binding region (H-T-H motif).

The sequence is that of Putative HTH-type transcriptional regulatory protein PYRAB03670 from Pyrococcus abyssi (strain GE5 / Orsay).